Consider the following 578-residue polypeptide: Probable methylcrotonoyl-CoA carboxylase beta chain, mitochondrial (578 aa).

The N-terminal 29 residues, 1–29, are a transit peptide targeting the mitochondrion; that stretch reads MIRLNWLFRSSSVLLRSQVRLLHVGDANV. Positions 48–305 constitute a CoA carboxyltransferase N-terminal domain; the sequence is MASLVGDLRN…SATNSYNDQL (258 aa). The segment at 48-570 is carboxyltransferase; sequence MASLVGDLRN…KAALNNAGQE (523 aa). Residues 321–570 enclose the CoA carboxyltransferase C-terminal domain; sequence AVEEPRYDAE…KAALNNAGQE (250 aa). Residues 355–388 form an acyl-CoA binding region; the sequence is DGSRFTEFKKLYGETLVCGFAKLYGHTVGIVGNN.

Belongs to the AccD/PCCB family. In terms of tissue distribution, expressed in third instar larval ring gland (lateral and medial secretory cells and corpus cardiacum cells) and CNS.

The protein localises to the mitochondrion matrix. It carries out the reaction 3-methylbut-2-enoyl-CoA + hydrogencarbonate + ATP = 3-methyl-(2E)-glutaconyl-CoA + ADP + phosphate + H(+). It participates in amino-acid degradation; L-leucine degradation; (S)-3-hydroxy-3-methylglutaryl-CoA from 3-isovaleryl-CoA: step 2/3. Functionally, carboxyltransferase subunit of the 3-methylcrotonyl-CoA carboxylase, an enzyme that catalyzes the conversion of 3-methylcrotonyl-CoA to 3-methylglutaconyl-CoA, a critical step for leucine and isovaleric acid catabolism. Vital for adult survival. This is Probable methylcrotonoyl-CoA carboxylase beta chain, mitochondrial from Drosophila melanogaster (Fruit fly).